We begin with the raw amino-acid sequence, 37 residues long: Large ribosomal subunit protein bL36c (37 aa).

It belongs to the bacterial ribosomal protein bL36 family.

The protein resides in the plastid. The protein localises to the chloroplast. The sequence is that of Large ribosomal subunit protein bL36c from Tetradesmus obliquus (Green alga).